A 439-amino-acid polypeptide reads, in one-letter code: Serine--tRNA ligase (439 aa).

242–244 (TAE) provides a ligand contact to L-serine. Residue 273–275 (RQE) coordinates ATP. Residue glutamate 296 coordinates L-serine. 360-363 (EISS) lines the ATP pocket. Position 396 (serine 396) interacts with L-serine.

It belongs to the class-II aminoacyl-tRNA synthetase family. Type-1 seryl-tRNA synthetase subfamily. In terms of assembly, homodimer. The tRNA molecule binds across the dimer.

It is found in the cytoplasm. It catalyses the reaction tRNA(Ser) + L-serine + ATP = L-seryl-tRNA(Ser) + AMP + diphosphate + H(+). The catalysed reaction is tRNA(Sec) + L-serine + ATP = L-seryl-tRNA(Sec) + AMP + diphosphate + H(+). It participates in aminoacyl-tRNA biosynthesis; selenocysteinyl-tRNA(Sec) biosynthesis; L-seryl-tRNA(Sec) from L-serine and tRNA(Sec): step 1/1. Functionally, catalyzes the attachment of serine to tRNA(Ser). Is also able to aminoacylate tRNA(Sec) with serine, to form the misacylated tRNA L-seryl-tRNA(Sec), which will be further converted into selenocysteinyl-tRNA(Sec). This Oenococcus oeni (strain ATCC BAA-331 / PSU-1) protein is Serine--tRNA ligase.